Consider the following 360-residue polypeptide: Phospho-N-acetylmuramoyl-pentapeptide-transferase (360 aa).

10 consecutive transmembrane segments (helical) span residues 26-46 (AVLS…KMIL), 73-93 (TMGG…WGDL), 94-114 (SNPY…IGFV), 132-152 (WKYF…YMIG), 168-188 (IMPQ…VGTS), 199-219 (GLAI…AWAT), 239-259 (LVIF…FNTY), 263-283 (VFMG…IAVL), 288-308 (FLLV…ILQV), and 338-358 (VIIR…VTLK).

The protein belongs to the glycosyltransferase 4 family. MraY subfamily. The cofactor is Mg(2+).

The protein resides in the cell inner membrane. It catalyses the reaction UDP-N-acetyl-alpha-D-muramoyl-L-alanyl-gamma-D-glutamyl-meso-2,6-diaminopimeloyl-D-alanyl-D-alanine + di-trans,octa-cis-undecaprenyl phosphate = di-trans,octa-cis-undecaprenyl diphospho-N-acetyl-alpha-D-muramoyl-L-alanyl-D-glutamyl-meso-2,6-diaminopimeloyl-D-alanyl-D-alanine + UMP. It participates in cell wall biogenesis; peptidoglycan biosynthesis. In terms of biological role, catalyzes the initial step of the lipid cycle reactions in the biosynthesis of the cell wall peptidoglycan: transfers peptidoglycan precursor phospho-MurNAc-pentapeptide from UDP-MurNAc-pentapeptide onto the lipid carrier undecaprenyl phosphate, yielding undecaprenyl-pyrophosphoryl-MurNAc-pentapeptide, known as lipid I. The protein is Phospho-N-acetylmuramoyl-pentapeptide-transferase of Actinobacillus succinogenes (strain ATCC 55618 / DSM 22257 / CCUG 43843 / 130Z).